The primary structure comprises 445 residues: Glutamate--tRNA ligase 2 (445 aa).

The 'HIGH' region motif lies at 10-20; the sequence is PSPTGMLHVGN. A 'KMSKS' region motif is present at residues 240 to 244; the sequence is KISKR. An ATP-binding site is contributed by Lys-243.

It belongs to the class-I aminoacyl-tRNA synthetase family. Glutamate--tRNA ligase type 1 subfamily. Monomer.

Its subcellular location is the cytoplasm. It carries out the reaction tRNA(Glu) + L-glutamate + ATP = L-glutamyl-tRNA(Glu) + AMP + diphosphate. Its function is as follows. Catalyzes the attachment of glutamate to tRNA(Glu) in a two-step reaction: glutamate is first activated by ATP to form Glu-AMP and then transferred to the acceptor end of tRNA(Glu). The sequence is that of Glutamate--tRNA ligase 2 from Rickettsia canadensis (strain McKiel).